Here is a 1017-residue protein sequence, read N- to C-terminus: MYRKNANFVECEEEVLEYWRRNKSFERSCERSRGREKFTFYDGPPFATGLPHYGHLLSGTIKDTVTRFFYQQGYDVDRRFGWDCHGLPVEYEIDKKLGISSRAEVLEMGIGKYNAECRGIVMKYSSEWEAVVERLGRWVSFRDGYRTMDMTFMESVWNIFKELFSRGLIYRGFRVMPFSTACSTPLSNFESNQNYKDVSDPSVLIAFPLLKPLGGYMLSLVAWTTTPWTLPSNCGLAVNPGFLYGVFEHKEKFYLMHVDRIGEYFKDARILQRVSGRELEGLEYEQPFDYFEEYRKKGFFRVLASGFVTDTDGTGVVHCAPGFGECDYNAFVEKGLIRENDLVPCPVDENGRYTSEVRRYAGRYVKDCDKAILSDIRDKVLMNQRIVHKYPFCWRSDTPLLYKLVPNWFVKVKDHVDSLLRNNEKINWVPPDIKYKRFHNWLENARDWSISRNRFWGTPIPLWVTEDYSDMICIGSVGELEELSGRKIDDIHREFIDGIVIHRNGREYRRVEEVLDCWFESGSMPYAQDHWPFCKESGVDLGSLSVSGGEERNKKLVKENFPAHFIGEGLDQTRGWFYTLHVISSLLFGQPAFLNVVVNGIVLAEDGRKMSKRLRNYPDPSHIFNTYGADSLRMYLISSPVVEAENLKFSEGGVKEVLKTLIIPWYNSLGFYLENRDVEPDGRSLPMDGWITASFDNFAWSLTRKMRKYELSSVLTLALRFIDDLSNWYIRMYRKEIRAGHHAVLGEILKKFSIVMGPFTPFFSEYSYQSLNPGESVHFQEYPVCKNGTHPFEMAKSIIAAVRRLRETNSISLKTPLKSATLMSSSSLYEGIKDYIDAIKTECNVLELLYKEEDRSMFDITVKPNFLSLKKDKATMKKKMKVIQGLTGDQAYSLLSSPLVVDGLEILRDDVLIVKKIRCEGIAQEFGDFSIIIDNTLDEGMVKMKIAREFHSYIQKLRKSAGLRVGDDVVVDIQCPDLKGIVSKYFDISFGSLGALSGRGEYEFDGTLYPVSLYKKL.

A 'HIGH' region motif is present at residues 45–55; that stretch reads PFATGLPHYGH. The 'KMSKS' region signature appears at 609–613; sequence KMSKR. An ATP-binding site is contributed by lysine 612.

The protein belongs to the class-I aminoacyl-tRNA synthetase family.

The protein resides in the cytoplasm. The catalysed reaction is tRNA(Ile) + L-isoleucine + ATP = L-isoleucyl-tRNA(Ile) + AMP + diphosphate. This chain is Probable isoleucine--tRNA ligase, cytoplasmic, found in Encephalitozoon cuniculi (strain GB-M1) (Microsporidian parasite).